Here is a 336-residue protein sequence, read N- to C-terminus: DNA-directed RNA polymerase subunit alpha (336 aa).

An alpha N-terminal domain (alpha-NTD) region spans residues 1 to 232 (MIQKNWQELI…DQLSVFVNFD (232 aa)). Residues 248–336 (FNPALLKKVD…DLAKRYEDQY (89 aa)) form an alpha C-terminal domain (alpha-CTD) region.

It belongs to the RNA polymerase alpha chain family. Homodimer. The RNAP catalytic core consists of 2 alpha, 1 beta, 1 beta' and 1 omega subunit. When a sigma factor is associated with the core the holoenzyme is formed, which can initiate transcription.

The catalysed reaction is RNA(n) + a ribonucleoside 5'-triphosphate = RNA(n+1) + diphosphate. In terms of biological role, DNA-dependent RNA polymerase catalyzes the transcription of DNA into RNA using the four ribonucleoside triphosphates as substrates. This Sinorhizobium fredii (strain NBRC 101917 / NGR234) protein is DNA-directed RNA polymerase subunit alpha.